Consider the following 783-residue polypeptide: Endonuclease MutS2 (783 aa).

328 to 335 (GPNTGGKT) provides a ligand contact to ATP. The 76-residue stretch at 708 to 783 (LDLRGKRYEE…GSGCTIATLG (76 aa)) folds into the Smr domain.

It belongs to the DNA mismatch repair MutS family. MutS2 subfamily. Homodimer. Binds to stalled ribosomes, contacting rRNA.

In terms of biological role, endonuclease that is involved in the suppression of homologous recombination and thus may have a key role in the control of bacterial genetic diversity. Functionally, acts as a ribosome collision sensor, splitting the ribosome into its 2 subunits. Detects stalled/collided 70S ribosomes which it binds and splits by an ATP-hydrolysis driven conformational change. Acts upstream of the ribosome quality control system (RQC), a ribosome-associated complex that mediates the extraction of incompletely synthesized nascent chains from stalled ribosomes and their subsequent degradation. Probably generates substrates for RQC. The protein is Endonuclease MutS2 of Streptococcus thermophilus (strain ATCC BAA-250 / LMG 18311).